Consider the following 138-residue polypeptide: Membrane protein P8A7 (138 aa).

4 helical membrane-spanning segments follow: residues 12–30, 32–56, 71–90, and 93–118; these read ILVI…YLFV, GLFH…IVLL, YTYW…LILG, and GFFL…LLGC.

The protein resides in the membrane. The protein is Membrane protein P8A7 (pmpA) of Dictyostelium discoideum (Social amoeba).